The sequence spans 274 residues: Large ribosomal subunit protein uL2 (274 aa).

The tract at residues 223–264 (VAMNPVDHPHGGGEGRTSGGRHPVSPWGVPTKGYKTRSNKRT) is disordered.

It belongs to the universal ribosomal protein uL2 family. As to quaternary structure, part of the 50S ribosomal subunit. Forms a bridge to the 30S subunit in the 70S ribosome.

One of the primary rRNA binding proteins. Required for association of the 30S and 50S subunits to form the 70S ribosome, for tRNA binding and peptide bond formation. It has been suggested to have peptidyltransferase activity; this is somewhat controversial. Makes several contacts with the 16S rRNA in the 70S ribosome. In Shewanella denitrificans (strain OS217 / ATCC BAA-1090 / DSM 15013), this protein is Large ribosomal subunit protein uL2.